Reading from the N-terminus, the 435-residue chain is Serine--tRNA ligase (435 aa).

The tract at residues 41 to 70 (QVKTEELQAQRNSRSKSIGQAKAKGDHEEA) is disordered. Residues 49–58 (AQRNSRSKSI) show a composition bias toward polar residues. L-serine is bound at residue 242 to 244 (TAE). 273-275 (RSE) serves as a coordination point for ATP. Glu296 contributes to the L-serine binding site. 360 to 363 (EISS) provides a ligand contact to ATP. Residue Ser396 participates in L-serine binding.

It belongs to the class-II aminoacyl-tRNA synthetase family. Type-1 seryl-tRNA synthetase subfamily. As to quaternary structure, homodimer. The tRNA molecule binds across the dimer.

The protein localises to the cytoplasm. It catalyses the reaction tRNA(Ser) + L-serine + ATP = L-seryl-tRNA(Ser) + AMP + diphosphate + H(+). The enzyme catalyses tRNA(Sec) + L-serine + ATP = L-seryl-tRNA(Sec) + AMP + diphosphate + H(+). Its pathway is aminoacyl-tRNA biosynthesis; selenocysteinyl-tRNA(Sec) biosynthesis; L-seryl-tRNA(Sec) from L-serine and tRNA(Sec): step 1/1. Its function is as follows. Catalyzes the attachment of serine to tRNA(Ser). Is also able to aminoacylate tRNA(Sec) with serine, to form the misacylated tRNA L-seryl-tRNA(Sec), which will be further converted into selenocysteinyl-tRNA(Sec). This chain is Serine--tRNA ligase, found in Aliivibrio fischeri (strain ATCC 700601 / ES114) (Vibrio fischeri).